The primary structure comprises 212 residues: Ras-related protein Rab-43 (212 aa).

Position 25–32 (25–32 (GDASVGKT)) interacts with GTP. The Effector region signature appears at 47-55 (QGSTIGVDF). Ser49 carries the phosphoserine modification. 73-77 (DTAGQ) is a GTP binding site. The residue at position 82 (Thr82) is a Phosphothreonine; by LRRK2. Residues 131-134 (NKSD) and 163-164 (AK) contribute to the GTP site. Residue Ser193 is modified to Phosphoserine. S-geranylgeranyl cysteine attachment occurs at residues Cys210 and Cys212. A Cysteine methyl ester modification is found at Cys212.

It belongs to the small GTPase superfamily. Rab family. In terms of assembly, interacts with GDI1, GDI2, CHM and CHML; phosphorylation at Thr-82 disrupts these interactions. Widely expressed in brain, testis, lung, heart, ovary, colon, kidney, uterus and spleen but not in liver.

The protein resides in the cytoplasmic vesicle. The protein localises to the phagosome. It is found in the phagosome membrane. It localises to the golgi apparatus. Its subcellular location is the trans-Golgi network membrane. The protein resides in the trans-Golgi network. Its function is as follows. The small GTPases Rab are key regulators of intracellular membrane trafficking, from the formation of transport vesicles to their fusion with membranes. Rabs cycle between an inactive GDP-bound form and an active GTP-bound form that is able to recruit to membranes different set of downstream effectors directly responsible for vesicle formation, movement, tethering and fusion. The low intrinsic GTPase activity of RAB43 is activated by USP6NL. Involved in retrograde transport from the endocytic pathway to the Golgi apparatus. Involved in the transport of Shiga toxin from early and recycling endosomes to the trans-Golgi network. Required for the structural integrity of the Golgi complex. Plays a role in the maturation of phagosomes that engulf pathogens, such as S.aureus and M.tuberculosis. The chain is Ras-related protein Rab-43 (RAB43) from Homo sapiens (Human).